The chain runs to 108 residues: Ig kappa chain V-V region EPC 109 (108 aa).

The framework-1 stretch occupies residues 1–23; that stretch reads DVQMIQSPSSLSASLGDIVTMTC. Cysteine 23 and cysteine 88 form a disulfide bridge. Positions 24-34 are complementarity-determining-1; the sequence is QASQGTNINLN. Residues 35–49 form a framework-2 region; the sequence is WFQQKPGKAPKLLIY. Positions 50-56 are complementarity-determining-2; the sequence is GASILEA. The interval 57–88 is framework-3; that stretch reads GVPSRFSGRRYGTDFTLTISSLEDEDMATYFC. The tract at residues 89 to 97 is complementarity-determining-3; it reads LQHSYLPYT. Residues 98–108 are framework-4; the sequence is FGGGTKLEKKR.

The protein is Ig kappa chain V-V region EPC 109 of Mus musculus (Mouse).